We begin with the raw amino-acid sequence, 498 residues long: Death-associated inhibitor of apoptosis 2 (498 aa).

3 BIR repeats span residues 12–77 (RLAT…SMVL), 116–180 (RLVT…PRVQ), and 215–280 (RLRT…QFVL). Positions 249, 252, 269, and 276 each coordinate Zn(2+). An RING-type zinc finger spans residues 451–486 (CKVCLDEEVGVVFLPCGHLATCNQCAPSVANCPMCR).

It belongs to the IAP family. As to quaternary structure, interacts with the caspase Strica. Interacts (via BIR2 domain) with rpr and grim. Interacts (via the BIR2 and BIR3 domains) with hid. Interacts (via BIR3 domain) with Drice. Interacts with Dredd; likely to bind Dredd simultaneously with Fadd to form a trimeric complex. Caspase-dependent cleavage is required for suppression of Drice-mediated cell death. Expressed in both principal and stellar cells of the Malphigian tubules.

The protein localises to the nucleus. The protein resides in the cytoplasm. Functionally, required for activation of NF-kappaB transcription factors in the immune deficiency (Imd) signaling cascade which is essential for innate immune responses upon infection by Gram-negative bacteria. Promotes cytoplasmic cleavage of Rel and its translocation to the nucleus where it drives expression of antimicrobial peptides. Binds, polyubiquitinates and activates Dredd which is required for Rel-mediated induction of antimicrobial peptides. Anti-apoptotic protein which binds, ubiquitinates and inactivates the effector caspase Drice. Suppresses rpr and hid-dependent cell death in the eye. However, has also been shown to have little, if any, role in the regulation of the canonical caspase-dependent apoptosis pathway. Plays a role in regulating the expression of ion channels. The chain is Death-associated inhibitor of apoptosis 2 (Diap2) from Drosophila melanogaster (Fruit fly).